The chain runs to 436 residues: Fasciclin-like arabinogalactan protein 15 (436 aa).

The N-terminal stretch at Met-1–Ala-20 is a signal peptide. FAS1 domains lie at Asn-31–Leu-165 and Val-249–Leu-392. N-linked (GlcNAc...) asparagine glycosylation is found at Asn-68 and Asn-271.

It belongs to the fasciclin-like AGP family.

Its subcellular location is the secreted. In terms of biological role, may be a cell surface adhesion protein. The chain is Fasciclin-like arabinogalactan protein 15 (FLA15) from Arabidopsis thaliana (Mouse-ear cress).